Here is a 238-residue protein sequence, read N- to C-terminus: Uridylate kinase (238 aa).

12–15 (KLSG) lines the ATP pocket. Gly-54 provides a ligand contact to UMP. ATP contacts are provided by Gly-55 and Arg-59. Residues Asp-74 and 135–142 (TGNPFFTT) each bind UMP. Residues Thr-162, Tyr-168, and Asp-171 each contribute to the ATP site.

It belongs to the UMP kinase family. As to quaternary structure, homohexamer.

Its subcellular location is the cytoplasm. It carries out the reaction UMP + ATP = UDP + ADP. It participates in pyrimidine metabolism; CTP biosynthesis via de novo pathway; UDP from UMP (UMPK route): step 1/1. Its activity is regulated as follows. Inhibited by UTP. Functionally, catalyzes the reversible phosphorylation of UMP to UDP. This is Uridylate kinase from Dechloromonas aromatica (strain RCB).